A 240-amino-acid polypeptide reads, in one-letter code: Seed lectin (240 aa).

Asn-111 is a glycosylation site (N-linked (GlcNAc...) asparagine). The Mn(2+) site is built by Glu-123 and Asp-125. Residues Asp-125, Asn-129, and Asp-132 each coordinate Ca(2+). Mn(2+)-binding residues include Asp-132 and His-137. N-linked (GlcNAc...) asparagine glycosylation is present at Asn-183.

This sequence belongs to the leguminous lectin family. Homotetramer. In terms of processing, partially N-glycosylated at Asn-111 and Asn-183 with the heptasaccharide [(beta-xylosyl-1,2)(alpha-mannosyl-1,6)(alpha-mannosyl-1,3)]beta-manosyl-1,4-GlcNAC-beta-1,4-GlcNAc-beta-1,4 [alpha-fucosyl-1,3]GlcNAc. A small proportion of alpha chains are proteolytically cleaved at 114-115 into gamma and beta chains. This is probably dependent on the deglycosylation of Asn-111. In terms of tissue distribution, seed.

Functionally, lectin that binds galactose. In Vatairea macrocarpa, this protein is Seed lectin.